Here is a 400-residue protein sequence, read N- to C-terminus: Large envelope protein (400 aa).

Residue Met-1 is modified to N-acetylmethionine. Gly-2 carries N-myristoyl glycine; by host lipidation. The tract at residues 2-119 (GAPLSTARRG…PPLRDTHPQA (118 aa)) is pre-S1. The interval 2 to 174 (GAPLSTARRG…FSKTGDPAMN (173 aa)) is pre-S. Over 2–181 (GAPLSTARRG…AMNMENITSG (180 aa)) the chain is Virion surface; in external conformation. Topologically, residues 2 to 253 (GAPLSTARRG…PGYRWMCLRR (252 aa)) are intravirion; in internal conformation. The N-linked (GlcNAc...) asparagine glycan is linked to Pro-4. The segment at 70–115 (PHGGLLGWSPQAQGILTTSPPDPPPASTNRRSGRKPTPVSPPLRDT) is disordered. Residues 79–88 (PQAQGILTTS) are compositionally biased toward polar residues. Residues 120–174 (MQWNSTQFHQALLDPRVRGLYLPAGGSSSETQNPVPTIASLTSSIFSKTGDPAMN) form a pre-S2 region. Residues 182–202 (LLGPLLVLQAVCFLLTKILTI) form a helical membrane-spanning segment. The Intravirion; in external conformation segment spans residues 203–253 (PQSLDSWWTSLNFLGVPPGCPGQNSQSPISNHLPTSCPPTCPGYRWMCLRR). A helical membrane pass occupies residues 254–274 (FIIFLFILLLCLIFLLVLLDY). The Virion surface portion of the chain corresponds to 275–348 (QGMLPVCPLL…WASARFSWLS (74 aa)). Asn-320 carries an N-linked (GlcNAc...) asparagine; by host glycan. A helical transmembrane segment spans residues 349–369 (LLVQFVQWCVGLSPTVWLLVI). The Intravirion portion of the chain corresponds to 370-375 (WMIWYW). The chain crosses the membrane as a helical span at residues 376-398 (GPNLCSILSPFIPLLPIFCYLWA). The Virion surface segment spans residues 399-400 (SI).

The protein belongs to the orthohepadnavirus major surface antigen family. In its internal form (Li-HBsAg), interacts with the capsid protein and with the isoform S. Interacts with host chaperone CANX. In terms of assembly, associates with host chaperone CANX through its pre-S2 N glycan; this association may be essential for isoform M proper secretion. As to quaternary structure, interacts with isoform L. Interacts with the antigens of satellite virus HDV (HDVAgs); this interaction is required for encapsidation of HDV genomic RNA. Isoform M is N-terminally acetylated by host at a ratio of 90%, and N-glycosylated by host at the pre-S2 region. Post-translationally, myristoylated.

The protein resides in the virion membrane. Functionally, the large envelope protein exists in two topological conformations, one which is termed 'external' or Le-HBsAg and the other 'internal' or Li-HBsAg. In its external conformation the protein attaches the virus to cell receptors and thereby initiating infection. This interaction determines the species specificity and liver tropism. This attachment induces virion internalization predominantly through caveolin-mediated endocytosis. The large envelope protein also assures fusion between virion membrane and endosomal membrane. In its internal conformation the protein plays a role in virion morphogenesis and mediates the contact with the nucleocapsid like a matrix protein. The middle envelope protein plays an important role in the budding of the virion. It is involved in the induction of budding in a nucleocapsid independent way. In this process the majority of envelope proteins bud to form subviral lipoprotein particles of 22 nm of diameter that do not contain a nucleocapsid. This chain is Large envelope protein, found in Hepatitis B virus genotype H subtype adw4 (isolate Nicaragua/2928Nic/1997) (HBV-H).